The chain runs to 1381 residues: Contactin-associated protein 1 (1381 aa).

The N-terminal stretch at 1 to 20 is a signal peptide; that stretch reads MMSLRLFSILLAAVVSGAQG. At 21-1284 the chain is on the extracellular side; that stretch reads WGYYGCNEEL…PYYHDDGWIA (1264 aa). The region spanning 26–169 is the F5/8 type C domain; sequence CNEELVGPLY…IGLRLGIYGC (144 aa). Residues cysteine 26 and cysteine 169 are joined by a disulfide bond. N-linked (GlcNAc...) asparagine glycans are attached at residues asparagine 121, asparagine 129, and asparagine 277. 2 Laminin G-like domains span residues 204-356 and 390-539; these read FKTE…AFRC and FRTW…FDTC. Cysteine 324 and cysteine 356 are joined by a disulfide. Asparagine 421, asparagine 500, and asparagine 519 each carry an N-linked (GlcNAc...) asparagine glycan. 4 disulfide bridges follow: cysteine 507–cysteine 539, cysteine 545–cysteine 556, cysteine 550–cysteine 565, and cysteine 567–cysteine 577. In terms of domain architecture, EGF-like 1 spans 544–576; it reads RCSPNMCEHDGRCYQSWDDFICYCELTGYKGVT. Residues 577–796 form the Fibrinogen C-terminal domain; that stretch reads CHEPLYKESC…NTISFRTGAA (220 aa). Residues asparagine 598, asparagine 654, asparagine 665, asparagine 764, asparagine 805, asparagine 844, asparagine 861, asparagine 949, and asparagine 957 are each glycosylated (N-linked (GlcNAc...) asparagine). In terms of domain architecture, Laminin G-like 3 spans 814–958; that stretch reads FRTSAPSGVF…NASEGTFPNC (145 aa). Cystine bridges form between cysteine 931–cysteine 958, cysteine 962–cysteine 975, cysteine 969–cysteine 984, and cysteine 986–cysteine 996. Residues 962–996 form the EGF-like 2 domain; that stretch reads CTHPRFPCFHGGRCVERYSYYTCDCDLTAFDGPYC. N-linked (GlcNAc...) asparagine glycosylation is found at asparagine 1079 and asparagine 1148. The Laminin G-like 4 domain occupies 1089 to 1251; sequence FSTSSAPAVL…VQGELSESNC (163 aa). A disulfide bridge links cysteine 1210 with cysteine 1251. Residues 1285–1305 form a helical membrane-spanning segment; that stretch reads ILLGFLVAFLLLGLVGMLVLF. Residues 1306 to 1381 are Cytoplasmic-facing; that stretch reads YLQNHRYKGS…PQILEESRSE (76 aa). A disordered region spans residues 1317–1381; the sequence is HTNEPKATHD…PQILEESRSE (65 aa). Residues 1319-1329 are compositionally biased toward basic and acidic residues; sequence NEPKATHDSHP. Positions 1329–1366 match the SH3-binding motif; it reads PGGKAPLPPSGPAQAPAPTPAPTQVPTPAPAPASGPGP. The segment covering 1334-1363 has biased composition (pro residues); sequence PLPPSGPAQAPAPTPAPTQVPTPAPAPASG. The residue at position 1380 (serine 1380) is a Phosphoserine.

It belongs to the neurexin family. Interacts with CNTN1/contactin in cis form. Predominantly expressed in brain. In myelinated nerve fibers of the CNS predominantly found in paranodal axoglial junctions. In unmyelinated nerve fibers of the CNS diffusely distributed along the entire surface. Weak expression is detected in ovary, pancreas, colon, lung, heart, intestine and testis.

The protein resides in the membrane. It is found in the cell junction. The protein localises to the paranodal septate junction. Functionally, required, with CNTNAP2, for radial and longitudinal organization of myelinated axons. Plays a role in the formation of functional distinct domains critical for saltatory conduction of nerve impulses in myelinated nerve fibers. Demarcates the paranodal region of the axo-glial junction. In association with contactin involved in the signaling between axons and myelinating glial cells. The protein is Contactin-associated protein 1 (Cntnap1) of Rattus norvegicus (Rat).